Consider the following 548-residue polypeptide: CTP synthase (548 aa).

The amidoligase domain stretch occupies residues 1–276 (MPTELTDYDP…DQYVMEQLGL (276 aa)). Residue S25 participates in CTP binding. Residue S25 participates in UTP binding. 26-31 (GLGKGI) contributes to the ATP binding site. Y66 lines the L-glutamine pocket. D83 is an ATP binding site. D83 and E151 together coordinate Mg(2+). CTP-binding positions include 158 to 160 (DIE), 197 to 202 (KTKPTQ), and K233. Residues 197 to 202 (KTKPTQ) and K233 contribute to the UTP site. Residues 303–541 (DIALVGKYAM…VETILETTDT (239 aa)) enclose the Glutamine amidotransferase type-1 domain. Residue G363 coordinates L-glutamine. The active-site Nucleophile; for glutamine hydrolysis is C390. Residues 391 to 394 (LGFQ), E414, and R471 contribute to the L-glutamine site. Active-site residues include H514 and E516.

This sequence belongs to the CTP synthase family. Homotetramer.

It catalyses the reaction UTP + L-glutamine + ATP + H2O = CTP + L-glutamate + ADP + phosphate + 2 H(+). The enzyme catalyses L-glutamine + H2O = L-glutamate + NH4(+). The catalysed reaction is UTP + NH4(+) + ATP = CTP + ADP + phosphate + 2 H(+). Its pathway is pyrimidine metabolism; CTP biosynthesis via de novo pathway; CTP from UDP: step 2/2. Allosterically activated by GTP, when glutamine is the substrate; GTP has no effect on the reaction when ammonia is the substrate. The allosteric effector GTP functions by stabilizing the protein conformation that binds the tetrahedral intermediate(s) formed during glutamine hydrolysis. Inhibited by the product CTP, via allosteric rather than competitive inhibition. Its function is as follows. Catalyzes the ATP-dependent amination of UTP to CTP with either L-glutamine or ammonia as the source of nitrogen. Regulates intracellular CTP levels through interactions with the four ribonucleotide triphosphates. In Natronomonas pharaonis (strain ATCC 35678 / DSM 2160 / CIP 103997 / JCM 8858 / NBRC 14720 / NCIMB 2260 / Gabara) (Halobacterium pharaonis), this protein is CTP synthase.